A 314-amino-acid polypeptide reads, in one-letter code: DNA-directed RNA polymerase subunit alpha (314 aa).

The tract at residues 1-227 is alpha N-terminal domain (alpha-NTD); that stretch reads MLEIEKPKIE…DYLKLFVALT (227 aa). The tract at residues 244–314 is alpha C-terminal domain (alpha-CTD); that stretch reads QDKILEMTIE…LGLSLRKSED (71 aa).

This sequence belongs to the RNA polymerase alpha chain family. As to quaternary structure, homodimer. The RNAP catalytic core consists of 2 alpha, 1 beta, 1 beta' and 1 omega subunit. When a sigma factor is associated with the core the holoenzyme is formed, which can initiate transcription.

It catalyses the reaction RNA(n) + a ribonucleoside 5'-triphosphate = RNA(n+1) + diphosphate. In terms of biological role, DNA-dependent RNA polymerase catalyzes the transcription of DNA into RNA using the four ribonucleoside triphosphates as substrates. In Heliobacterium modesticaldum (strain ATCC 51547 / Ice1), this protein is DNA-directed RNA polymerase subunit alpha.